Reading from the N-terminus, the 157-residue chain is Protein Smg homolog (157 aa).

This sequence belongs to the Smg family.

The protein is Protein Smg homolog of Aeromonas salmonicida (strain A449).